The primary structure comprises 1397 residues: DNA-directed RNA polymerase subunit beta' (1397 aa).

Cys75, Cys77, Cys90, and Cys93 together coordinate Zn(2+). 3 residues coordinate Mg(2+): Asp465, Asp467, and Asp469. The Zn(2+) site is built by Cys819, Cys893, Cys900, and Cys903.

It belongs to the RNA polymerase beta' chain family. The RNAP catalytic core consists of 2 alpha, 1 beta, 1 beta' and 1 omega subunit. When a sigma factor is associated with the core the holoenzyme is formed, which can initiate transcription. The cofactor is Mg(2+). It depends on Zn(2+) as a cofactor.

The enzyme catalyses RNA(n) + a ribonucleoside 5'-triphosphate = RNA(n+1) + diphosphate. DNA-dependent RNA polymerase catalyzes the transcription of DNA into RNA using the four ribonucleoside triphosphates as substrates. The polypeptide is DNA-directed RNA polymerase subunit beta' (Acinetobacter baylyi (strain ATCC 33305 / BD413 / ADP1)).